We begin with the raw amino-acid sequence, 260 residues long: Tropinone reductase 2 (260 aa).

Position 18–41 (18–41 (SRGIGYGIVEELASLGASVYTCSR)) interacts with NADP(+). Residue serine 146 participates in substrate binding. Tyrosine 159 serves as the catalytic Proton acceptor. 192–196 (IATSL) is a binding site for NADP(+).

Belongs to the short-chain dehydrogenases/reductases (SDR) family. As to quaternary structure, homodimer.

It catalyses the reaction pseudotropine + NADP(+) = tropinone + NADPH + H(+). The protein operates within alkaloid biosynthesis; tropane alkaloid biosynthesis. Catalyzes the stereospecific reduction of tropinone to pseudotropine. The polypeptide is Tropinone reductase 2 (TR2) (Datura stramonium (Jimsonweed)).